Reading from the N-terminus, the 539-residue chain is Probable malate:quinone oxidoreductase 3 (539 aa).

Positions 516 to 539 (LEPPVSPQRPESIRPADSQGVASR) are disordered.

This sequence belongs to the MQO family. It depends on FAD as a cofactor.

The enzyme catalyses (S)-malate + a quinone = a quinol + oxaloacetate. The protein operates within carbohydrate metabolism; tricarboxylic acid cycle; oxaloacetate from (S)-malate (quinone route): step 1/1. This Pseudomonas putida (strain ATCC 47054 / DSM 6125 / CFBP 8728 / NCIMB 11950 / KT2440) protein is Probable malate:quinone oxidoreductase 3.